Here is a 286-residue protein sequence, read N- to C-terminus: NADPH-dependent 7-cyano-7-deazaguanine reductase (286 aa).

Position 92–94 (I92–S94) interacts with substrate. S94–K95 serves as a coordination point for NADPH. The Thioimide intermediate role is filled by C194. Catalysis depends on D201, which acts as the Proton donor. H233–E234 contacts substrate. R262–G263 lines the NADPH pocket.

The protein belongs to the GTP cyclohydrolase I family. QueF type 2 subfamily. In terms of assembly, homodimer.

The protein resides in the cytoplasm. The catalysed reaction is 7-aminomethyl-7-carbaguanine + 2 NADP(+) = 7-cyano-7-deazaguanine + 2 NADPH + 3 H(+). Its pathway is tRNA modification; tRNA-queuosine biosynthesis. Its function is as follows. Catalyzes the NADPH-dependent reduction of 7-cyano-7-deazaguanine (preQ0) to 7-aminomethyl-7-deazaguanine (preQ1). This is NADPH-dependent 7-cyano-7-deazaguanine reductase from Shewanella sp. (strain MR-4).